The following is a 149-amino-acid chain: Vesicle-associated protein 3-1 (149 aa).

An N-acetylmethionine modification is found at M1. An N-acetylserine; in Vesicle-associated protein 3-1, N-terminally processed modification is found at S2. The MSP domain occupies 6–126 (LLEIEPMYLQ…EETKLRVTYV (121 aa)).

The protein belongs to the VAMP-associated protein (VAP) (TC 9.B.17) family.

Functionally, may play a role in vesicle trafficking. The polypeptide is Vesicle-associated protein 3-1 (PVA31) (Arabidopsis thaliana (Mouse-ear cress)).